We begin with the raw amino-acid sequence, 508 residues long: Ras association domain-containing protein 10 (508 aa).

The 133-residue stretch at 1 to 133 (MDPSEKKISV…VRFVLVRSEA (133 aa)) folds into the Ras-associating domain. Disordered stretches follow at residues 51-81 (RRGL…AMPP) and 186-221 (KLNR…ESAS). Residues 66–78 (EPPDENDEDDDDA) are compositionally biased toward acidic residues. Positions 195–214 (PSSPCSSTSSSTASSCSSSA) are enriched in low complexity. Coiled-coil stretches lie at residues 235–266 (QDHT…DRMR) and 319–358 (LEEL…NQRW). The interval 473-508 (GLAKSCPGNDEDSDTGLSSMHSQDSDSVPPVCESLV) is disordered. Polar residues predominate over residues 487-498 (TGLSSMHSQDSD).

As to expression, expressed in neural progenitor cells (at protein level).

The protein resides in the cytoplasm. Its subcellular location is the cytosol. It localises to the cytoskeleton. The protein localises to the microtubule organizing center. It is found in the centrosome. The protein resides in the spindle pole. In terms of biological role, plays an important role in regulating embryonic neurogenesis. The sequence is that of Ras association domain-containing protein 10 (Rassf10) from Mus musculus (Mouse).